Here is a 556-residue protein sequence, read N- to C-terminus: 2-isopropylmalate synthase (556 aa).

The Pyruvate carboxyltransferase domain occupies 33 to 307; that stretch reads PIWCSSDLRD…HPQLDFSDID (275 aa). D42, H246, H248, and N282 together coordinate Mg(2+). Residues 439-556 are regulatory domain; that stretch reads ATSPYVLASH…AVTQAEAKAA (118 aa).

It belongs to the alpha-IPM synthase/homocitrate synthase family. LeuA type 2 subfamily. In terms of assembly, homodimer. The cofactor is Mg(2+).

It localises to the cytoplasm. The enzyme catalyses 3-methyl-2-oxobutanoate + acetyl-CoA + H2O = (2S)-2-isopropylmalate + CoA + H(+). It functions in the pathway amino-acid biosynthesis; L-leucine biosynthesis; L-leucine from 3-methyl-2-oxobutanoate: step 1/4. In terms of biological role, catalyzes the condensation of the acetyl group of acetyl-CoA with 3-methyl-2-oxobutanoate (2-ketoisovalerate) to form 3-carboxy-3-hydroxy-4-methylpentanoate (2-isopropylmalate). In Pseudomonas aeruginosa (strain ATCC 15692 / DSM 22644 / CIP 104116 / JCM 14847 / LMG 12228 / 1C / PRS 101 / PAO1), this protein is 2-isopropylmalate synthase.